We begin with the raw amino-acid sequence, 520 residues long: Ribonuclease Y (520 aa).

Residues 4 to 24 form a helical membrane-spanning segment; the sequence is VSGILLVLIGLLAGVGLGVLL. Residues 210–270 enclose the KH domain; sequence TVSVVNLPNE…VRREVARVSL (61 aa). The HD domain maps to 336-429; the sequence is VLQHSREVAF…VQAADALSGA (94 aa).

It belongs to the RNase Y family.

The protein resides in the cell membrane. In terms of biological role, endoribonuclease that initiates mRNA decay. This chain is Ribonuclease Y, found in Syntrophobacter fumaroxidans (strain DSM 10017 / MPOB).